The following is a 142-amino-acid chain: Large ribosomal subunit protein bL17 (142 aa).

This sequence belongs to the bacterial ribosomal protein bL17 family. In terms of assembly, part of the 50S ribosomal subunit. Contacts protein L32.

The chain is Large ribosomal subunit protein bL17 from Chlamydia pneumoniae (Chlamydophila pneumoniae).